A 74-amino-acid polypeptide reads, in one-letter code: UPF0154 protein LVIS_1358 (74 aa).

The chain crosses the membrane as a helical span at residues 4-24 (WIWILIVIVVGLACAAGGFYG).

This sequence belongs to the UPF0154 family.

The protein resides in the cell membrane. This is UPF0154 protein LVIS_1358 from Levilactobacillus brevis (strain ATCC 367 / BCRC 12310 / CIP 105137 / JCM 1170 / LMG 11437 / NCIMB 947 / NCTC 947) (Lactobacillus brevis).